Consider the following 360-residue polypeptide: Bifunctional protein FolD 4, chloroplastic (360 aa).

A chloroplast-targeting transit peptide spans 1-51 (MASMMFTDCSSTTTSRLIHLNRSSGTFLLRQCVGQLRLQTTASGRGCCIRS). Ser-52 carries the N-acetylserine modification.

Belongs to the tetrahydrofolate dehydrogenase/cyclohydrolase family. Homodimer.

The protein localises to the plastid. It localises to the chloroplast. The enzyme catalyses (6R)-5,10-methylene-5,6,7,8-tetrahydrofolate + NADP(+) = (6R)-5,10-methenyltetrahydrofolate + NADPH. It catalyses the reaction (6R)-5,10-methenyltetrahydrofolate + H2O = (6R)-10-formyltetrahydrofolate + H(+). It functions in the pathway one-carbon metabolism; tetrahydrofolate interconversion. Functionally, catalyzes the oxidation of 5,10-methylenetetrahydrofolate to 5,10-methenyltetrahydrofolate and then the hydrolysis of 5,10-methenyltetrahydrofolate to 10-formyltetrahydrofolate. In Arabidopsis thaliana (Mouse-ear cress), this protein is Bifunctional protein FolD 4, chloroplastic (FOLD4).